We begin with the raw amino-acid sequence, 345 residues long: Trans-enoyl reductase tndF (345 aa).

The segment at methionine 1–lysine 26 is disordered. NADP(+) contacts are provided by residues cysteine 44 to arginine 49, serine 168 to valine 171, serine 191 to histidine 194, tyrosine 209, and leucine 244 to aspartate 245.

The protein belongs to the zinc-containing alcohol dehydrogenase family.

Its pathway is secondary metabolite biosynthesis; terpenoid biosynthesis. In terms of biological role, trans-enoyl reductase; part of the gene cluster that mediates the biosynthesis of talaronoid C, a fusicoccane diterpenoid with an unprecedented tricyclic 5/8/6 ring system. The first step in the pathway is performed by the fusicoccadiene synthase tndC that possesses both prenyl transferase and terpene cyclase activity, converting isopentenyl diphosphate and dimethylallyl diphosphate into geranylgeranyl diphosphate (GGDP) and further converting GGDP into talarodiene, a precursor for talaronoid C. The remaining enzymes from the cluster include the cytochrome P450 monooxygenase tndB, the aldehyde reductase tndE and the alcohol dehydrogenase tndF that are involved in the conversion of talarodiene into talaronoid C. This Aspergillus flavipes protein is Trans-enoyl reductase tndF.